The sequence spans 122 residues: Large ribosomal subunit protein uL14c (122 aa).

Belongs to the universal ribosomal protein uL14 family. Part of the 50S ribosomal subunit.

The protein resides in the plastid. It is found in the chloroplast. Functionally, binds to 23S rRNA. The protein is Large ribosomal subunit protein uL14c of Eucalyptus globulus subsp. globulus (Tasmanian blue gum).